We begin with the raw amino-acid sequence, 219 residues long: Phosphate-specific transport system accessory protein PhoU homolog (219 aa).

It belongs to the PhoU family. Homodimer.

It is found in the cytoplasm. Plays a role in the regulation of phosphate uptake. Encoded together with proteins of the phosphate-specific transport (Pst) system in the polycistronic pstSCAB-phoU operon. This chain is Phosphate-specific transport system accessory protein PhoU homolog, found in Clostridium acetobutylicum (strain ATCC 824 / DSM 792 / JCM 1419 / IAM 19013 / LMG 5710 / NBRC 13948 / NRRL B-527 / VKM B-1787 / 2291 / W).